Here is a 447-residue protein sequence, read N- to C-terminus: MKKTSVRDIALEALIKLEQNQAYSNLLLKSVIKSNELSDQNRGLLTELVYGTLQNKIALDYMLKPFINKPQKVKPWVIQLLRLSLYQMEYLEKIPDRAAIHEAVEIAKIRGHKGIASFVNGVLRSIQREGVPSFDAIEDPVRRLATETSHPEWLVKEWADAYGFEAAEKICRIHLIPPKQTLRVNQMKADRAELLDQMAAEGIEVEKGDLAEDAVKLLKGTIAGTHFFQNGEVSIQDESSMLVARALDPKSDETVLDACAAPGGKSAHIAELMKNKGSVTSLDLHKHKVKLIKEAADRLGLTIIHAETMDARKAGETFENEQFDRILVDAPCSGFGVIRRKPDMKYTKKPDDSARLAEIQLSILREIAPLVKKGGTLVYSTCTMDRTENDEVIHAFIQEHPDFEPDLSLEKRLPEKVRPFVRDGRLQILPHYFGTDGFFICSMRKKG.

Residues 259–265, aspartate 283, aspartate 310, and aspartate 329 contribute to the S-adenosyl-L-methionine site; that span reads CAAPGGK. Catalysis depends on cysteine 382, which acts as the Nucleophile.

This sequence belongs to the class I-like SAM-binding methyltransferase superfamily. RsmB/NOP family.

Its subcellular location is the cytoplasm. The enzyme catalyses cytidine(967) in 16S rRNA + S-adenosyl-L-methionine = 5-methylcytidine(967) in 16S rRNA + S-adenosyl-L-homocysteine + H(+). Its function is as follows. Specifically methylates the cytosine at position 967 (m5C967) of 16S rRNA. This chain is Probable ribosomal RNA small subunit methyltransferase B, found in Bacillus subtilis (strain 168).